A 782-amino-acid polypeptide reads, in one-letter code: Semaphorin-3G (782 aa).

Positions 1 to 22 (MAPSAWAICWLLGGLLLHGGSS) are cleaved as a signal peptide. The Sema domain maps to 32-519 (RLRLSYRDLL…SRLGVAQLRL (488 aa)). N-linked (GlcNAc...) asparagine glycosylation occurs at Asn-44. The cysteines at positions 105 and 116 are disulfide-linked. Asn-127 carries an N-linked (GlcNAc...) asparagine glycan. 5 disulfides stabilise this stretch: Cys-134/Cys-143, Cys-270/Cys-382, Cys-294/Cys-342, Cys-522/Cys-540, and Cys-603/Cys-655. The Ig-like C2-type domain occupies 569–671 (PALQCLGQSQ…FSQTVVRLAL (103 aa)).

The protein belongs to the semaphorin family.

The protein localises to the secreted. Its function is as follows. Has chemorepulsive activities for sympathetic axons. Ligand of NRP2. The protein is Semaphorin-3G (SEMA3G) of Homo sapiens (Human).